The primary structure comprises 311 residues: Malate dehydrogenase (311 aa).

Residues 7 to 13 and Asp-34 each bind NAD(+); that span reads GAAGGIG. Positions 81 and 87 each coordinate substrate. Residues Asn-94 and 117 to 119 each bind NAD(+); that span reads ITN. Asn-119 and Arg-153 together coordinate substrate. Residue His-177 is the Proton acceptor of the active site. Met-227 serves as a coordination point for NAD(+).

The protein belongs to the LDH/MDH superfamily. MDH type 1 family. As to quaternary structure, homodimer.

The enzyme catalyses (S)-malate + NAD(+) = oxaloacetate + NADH + H(+). Catalyzes the reversible oxidation of malate to oxaloacetate. This chain is Malate dehydrogenase, found in Aliivibrio salmonicida (strain LFI1238) (Vibrio salmonicida (strain LFI1238)).